The following is a 723-amino-acid chain: CSC1-like protein ERD4 (723 aa).

Over 1 to 5 (MEFAS) the chain is Cytoplasmic. The chain crosses the membrane as a helical span at residues 6 to 26 (FLVSLGTSAIIFVVLMFLFTW). Residues 27–90 (LSRRPGNVPV…TAVYFVFQST (64 aa)) lie on the Extracellular side of the membrane. Residues 91–111 (VLGIFALSALLLLPTLLPIAA) traverse the membrane as a helical segment. The Cytoplasmic segment spans residues 112–148 (TDNNLETSRSATDTTSNGTFSQLDNLSMANITKSSSR). A helical membrane pass occupies residues 149–169 (LWAFLGAVYWVSVVTYFMLWK). The Extracellular segment spans residues 170–364 (AYKHVAALRA…IKFFSRIVRQ (195 aa)). The helical transmembrane segment at 365–385 (YVIYFLVAITILFYMIPIAFV) threads the bilayer. Topologically, residues 386-416 (SAITTLANLQKALPFLKPIVDIAFIRTILES) are cytoplasmic. A helical transmembrane segment spans residues 417–437 (YLPQIALIVFLAMLPKFLMFL). At 438-456 (SKSEGIPSQSHAIRATSGK) the chain is on the extracellular side. The helical transmembrane segment at 457 to 477 (YFYFSVLNVFIGVTLAGSLFE) threads the bilayer. Residues 478 to 508 (NLKALEEKPNSFITLLATSLPKSATFFLTYV) are Cytoplasmic-facing. A helical membrane pass occupies residues 509–529 (ALKFFVGYGLELSRIIPLIIF). Residues 530–572 (HLKKKYLCKTEAEVKEAWYPGDLSYATRVPSDMLILTITFCYS) lie on the Extracellular side of the membrane. Residues 573–593 (VIAPLILVFGVIYFGLGWLIL) form a helical membrane-spanning segment. The Cytoplasmic portion of the chain corresponds to 594–614 (RNQALKVYVPSYESYGRMWPH). The chain crosses the membrane as a helical span at residues 615 to 635 (IHTRILAALFLFQLVMFGYLG). At 636-637 (VK) the chain is on the extracellular side. Residues 638 to 658 (IFVWAILLVPLIFISLIFGYV) traverse the membrane as a helical segment. Over 659 to 723 (CRQKFYGGFE…YQDYAAISAA (65 aa)) the chain is Cytoplasmic.

This sequence belongs to the CSC1 (TC 1.A.17) family.

The protein resides in the plastid. Its subcellular location is the chloroplast membrane. Functionally, acts as an osmosensitive calcium-permeable cation channel. This is CSC1-like protein ERD4 (ERD4) from Brassica juncea (Indian mustard).